Here is a 314-residue protein sequence, read N- to C-terminus: tRNA-cytidine(32) 2-sulfurtransferase (314 aa).

A PP-loop motif motif is present at residues 39 to 44; sequence SGGKDS. 3 residues coordinate [4Fe-4S] cluster: cysteine 114, cysteine 117, and cysteine 205.

The protein belongs to the TtcA family. As to quaternary structure, homodimer. Mg(2+) is required as a cofactor. Requires [4Fe-4S] cluster as cofactor.

It localises to the cytoplasm. The enzyme catalyses cytidine(32) in tRNA + S-sulfanyl-L-cysteinyl-[cysteine desulfurase] + AH2 + ATP = 2-thiocytidine(32) in tRNA + L-cysteinyl-[cysteine desulfurase] + A + AMP + diphosphate + H(+). It participates in tRNA modification. Catalyzes the ATP-dependent 2-thiolation of cytidine in position 32 of tRNA, to form 2-thiocytidine (s(2)C32). The sulfur atoms are provided by the cysteine/cysteine desulfurase (IscS) system. This Cupriavidus necator (strain ATCC 17699 / DSM 428 / KCTC 22496 / NCIMB 10442 / H16 / Stanier 337) (Ralstonia eutropha) protein is tRNA-cytidine(32) 2-sulfurtransferase.